Reading from the N-terminus, the 88-residue chain is Small ribosomal subunit protein uS17 (88 aa).

This sequence belongs to the universal ribosomal protein uS17 family. Part of the 30S ribosomal subunit.

Its function is as follows. One of the primary rRNA binding proteins, it binds specifically to the 5'-end of 16S ribosomal RNA. This chain is Small ribosomal subunit protein uS17, found in Synechococcus sp. (strain CC9311).